The sequence spans 232 residues: GTP cyclohydrolase III (232 aa).

The protein belongs to the archaeal-type GTP cyclohydrolase family.

The enzyme catalyses GTP + 3 H2O = 2-amino-5-formylamino-6-(5-phospho-D-ribosylamino)pyrimidin-4(3H)-one + 2 phosphate + 2 H(+). Functionally, catalyzes the formation of 2-amino-5-formylamino-6-ribofuranosylamino-4(3H)-pyrimidinone ribonucleotide monophosphate and inorganic phosphate from GTP. Also has an independent pyrophosphate phosphohydrolase activity. The polypeptide is GTP cyclohydrolase III (Saccharolobus islandicus (strain Y.N.15.51 / Yellowstone #2) (Sulfolobus islandicus)).